The following is a 513-amino-acid chain: MAAAAVARRVVLVLVLAAASLAAAPRGAAARSLGGREGPGEVDADAAVDLNATNFDAFLKASLEPWAVVEFFAHWCPACRNYKPHYEKVAKLFNGRDAAHPGLILMARVDCASKVNIDLCNRFSVDHYPFLLWGPPTKFASAKWDPKQENNEIKLIDDGRTAERLLKWINNQMKSSFSLEDKKYENENMLPKNASDPEQIVQAIYDVEEATAQALQIILERKTIKPKNRDSLIRFLQILVARHPSKRCRRGSAELLINFDDHWSSNLSLSSQEGSKLLESVAEENHWICGKEVPRGYWLFCRGSKSETRGFSCGLWVLMHSLTVRIGDGESQSTFTSICDFIHNFFICEECRKHFYEMCSSVSAPFRTARELSLWLWSTHNKVNMRLMKEEKDMGTGDPLFPKVTWPPNQLCPSCYRSSKVTDGAVDWNEDAVYQFLVNYYGKKLVSSYKETYMESLQQQEKKIVSEDSSISNAASVPIGAALGVAIASCTFGALACFWRAQQKNRKQRKNWN.

Positions 1–30 (MAAAAVARRVVLVLVLAAASLAAAPRGAAA) are cleaved as a signal peptide. The Thioredoxin domain occupies 31 to 174 (RSLGGREGPG…LLKWINNQMK (144 aa)). A glycan (N-linked (GlcNAc...) asparagine) is linked at Asn-51. Active-site nucleophile residues include Cys-76 and Cys-79. The cysteines at positions 76 and 79 are disulfide-linked. Asn-193 and Asn-266 each carry an N-linked (GlcNAc...) asparagine glycan. The cysteines at positions 301 and 313 are disulfide-linked. The ERV/ALR sulfhydryl oxidase domain maps to 304-406 (SKSETRGFSC…GDPLFPKVTW (103 aa)). Residues Arg-309, Trp-316, His-320, Glu-350, His-354, 377–384 (WSTHNKVN), Lys-403, and Trp-406 contribute to the FAD site. A disulfide bridge connects residues Cys-348 and Cys-351. The cysteines at positions 412 and 415 are disulfide-linked.

The cofactor is FAD.

Its subcellular location is the secreted. It catalyses the reaction 2 R'C(R)SH + O2 = R'C(R)S-S(R)CR' + H2O2. Catalyzes the oxidation of sulfhydryl groups in peptide and protein thiols to disulfides with the reduction of oxygen to hydrogen peroxide. May contribute to disulfide bond formation in a variety of secreted proteins. The protein is Sulfhydryl oxidase 1 (QSOX1) of Oryza sativa subsp. japonica (Rice).